Consider the following 174-residue polypeptide: Large ribosomal subunit protein uL10 (174 aa).

The protein belongs to the universal ribosomal protein uL10 family. In terms of assembly, part of the ribosomal stalk of the 50S ribosomal subunit. The N-terminus interacts with L11 and the large rRNA to form the base of the stalk. The C-terminus forms an elongated spine to which L12 dimers bind in a sequential fashion forming a multimeric L10(L12)X complex.

Its function is as follows. Forms part of the ribosomal stalk, playing a central role in the interaction of the ribosome with GTP-bound translation factors. The protein is Large ribosomal subunit protein uL10 of Bordetella bronchiseptica (strain ATCC BAA-588 / NCTC 13252 / RB50) (Alcaligenes bronchisepticus).